Here is a 168-residue protein sequence, read N- to C-terminus: 3'-5' exoribonuclease MT2234.1 (168 aa).

Aspartate 6 is a Mg(2+) binding site. The interval 6-9 (DTEF) is RNA binding.

As to quaternary structure, homodimer. Mg(2+) is required as a cofactor.

In terms of biological role, exonuclease that cleaves single-stranded 3' overhangs of double-stranded RNA. The chain is 3'-5' exoribonuclease MT2234.1 from Mycobacterium tuberculosis (strain CDC 1551 / Oshkosh).